The primary structure comprises 155 residues: 6,7-dimethyl-8-ribityllumazine synthase (155 aa).

Residues phenylalanine 24, 58 to 60 (AFE), and 82 to 84 (VII) each bind 5-amino-6-(D-ribitylamino)uracil. Position 87–88 (87–88 (ST)) interacts with (2S)-2-hydroxy-3-oxobutyl phosphate. The active-site Proton donor is histidine 90. Position 115 (phenylalanine 115) interacts with 5-amino-6-(D-ribitylamino)uracil. Arginine 129 is a (2S)-2-hydroxy-3-oxobutyl phosphate binding site.

This sequence belongs to the DMRL synthase family.

The enzyme catalyses (2S)-2-hydroxy-3-oxobutyl phosphate + 5-amino-6-(D-ribitylamino)uracil = 6,7-dimethyl-8-(1-D-ribityl)lumazine + phosphate + 2 H2O + H(+). It participates in cofactor biosynthesis; riboflavin biosynthesis; riboflavin from 2-hydroxy-3-oxobutyl phosphate and 5-amino-6-(D-ribitylamino)uracil: step 1/2. Its function is as follows. Catalyzes the formation of 6,7-dimethyl-8-ribityllumazine by condensation of 5-amino-6-(D-ribitylamino)uracil with 3,4-dihydroxy-2-butanone 4-phosphate. This is the penultimate step in the biosynthesis of riboflavin. The chain is 6,7-dimethyl-8-ribityllumazine synthase from Chlorobium chlorochromatii (strain CaD3).